The primary structure comprises 630 residues: Arginine--tRNA ligase (630 aa).

The 'HIGH' region signature appears at alanine 120 to histidine 130.

Belongs to the class-I aminoacyl-tRNA synthetase family.

The protein resides in the cytoplasm. The catalysed reaction is tRNA(Arg) + L-arginine + ATP = L-arginyl-tRNA(Arg) + AMP + diphosphate. This chain is Arginine--tRNA ligase, found in Pyrobaculum arsenaticum (strain DSM 13514 / JCM 11321 / PZ6).